The primary structure comprises 333 residues: Cathepsin M (333 aa).

An N-terminal signal peptide occupies residues 1 to 15; that stretch reads MTSAIFLAMLCLGMA. Positions 16–113 are cleaved as a propeptide — activation peptide; sequence LPSPAPDPIL…KSVQKRLSVN (98 aa). Intrachain disulfides connect cysteine 135–cysteine 178 and cysteine 169–cysteine 211. The active site involves cysteine 138. Asparagine 217, asparagine 221, and asparagine 268 each carry an N-linked (GlcNAc...) asparagine glycan. Cysteine 269 and cysteine 322 are joined by a disulfide. Active-site residues include histidine 276 and asparagine 300.

The protein belongs to the peptidase C1 family. As to expression, placenta.

It is found in the lysosome. This chain is Cathepsin M (Ctsm), found in Mus musculus (Mouse).